The chain runs to 436 residues: GTPase Der (436 aa).

2 consecutive EngA-type G domains span residues proline 4–glutamate 167 and valine 174–threonine 350. GTP-binding positions include glycine 10–serine 17, aspartate 57–leucine 61, asparagine 120–aspartate 123, glycine 180–serine 187, aspartate 227–leucine 231, and asparagine 292–aspartate 295. The region spanning arginine 351–asparagine 435 is the KH-like domain.

Belongs to the TRAFAC class TrmE-Era-EngA-EngB-Septin-like GTPase superfamily. EngA (Der) GTPase family. As to quaternary structure, associates with the 50S ribosomal subunit.

Its function is as follows. GTPase that plays an essential role in the late steps of ribosome biogenesis. This chain is GTPase Der, found in Gemmatimonas aurantiaca (strain DSM 14586 / JCM 11422 / NBRC 100505 / T-27).